We begin with the raw amino-acid sequence, 850 residues long: Ras GTPase-activating protein 2 (850 aa).

The segment covering 1 to 24 (MAAAAPAAAAASSEAPAASATAEP) has biased composition (low complexity). Residues 1–32 (MAAAAPAAAAASSEAPAASATAEPEAGDQDSR) form a disordered region. Alanine 2 is modified (N-acetylalanine). C2 domains lie at 20-138 (ATAE…ETWF) and 149-289 (VQGK…QAWY). The region spanning 372-589 (DKLVPFATAV…IAVKKFLDEI (218 aa)) is the Ras-GAP domain. Serine 555 is subject to Phosphoserine. Residues 604-706 (VHLKEGEMYK…WIDVLCRVSR (103 aa)) enclose the PH domain. Residues 708-744 (NQNRLSFYHPSVYLNGNWLCCQETGENTLGCKPCTAG) form a Btk-type zinc finger. 4 residues coordinate Zn(2+): histidine 716, cysteine 727, cysteine 728, and cysteine 738. Residues 825–850 (HEKYRKKRSSSAKYGSKENPIVGKAS) are disordered.

It localises to the cytoplasm. It is found in the perinuclear region. Its function is as follows. Inhibitory regulator of the Ras-cyclic AMP pathway. Binds inositol tetrakisphosphate (IP4). The sequence is that of Ras GTPase-activating protein 2 (RASA2) from Homo sapiens (Human).